We begin with the raw amino-acid sequence, 174 residues long: Large ribosomal subunit protein uL22 (174 aa).

Belongs to the universal ribosomal protein uL22 family. In terms of assembly, part of the 50S ribosomal subunit.

Its function is as follows. This protein binds specifically to 23S rRNA. It makes multiple contacts with different domains of the 23S rRNA in the assembled 50S subunit and ribosome. In terms of biological role, the globular domain of the protein is located near the polypeptide exit tunnel on the outside of the subunit, while an extended beta-hairpin is found that lines the wall of the exit tunnel in the center of the 70S ribosome. In Nanoarchaeum equitans (strain Kin4-M), this protein is Large ribosomal subunit protein uL22.